Consider the following 777-residue polypeptide: Rho guanine nucleotide exchange factor 38 (777 aa).

The residue at position 34 (Thr-34) is a Phosphothreonine. The segment at 35-72 is disordered; that stretch reads DTVVESSVSGDHSGTLRRSQSDRTEYNQKLQEKMTPQG. Residues 37–52 show a composition bias toward polar residues; sequence VVESSVSGDHSGTLRR. Residues 53–66 are compositionally biased toward basic and acidic residues; sequence SQSDRTEYNQKLQE. In terms of domain architecture, DH spans 94-285; that stretch reads KREKIIKELI…KDINVNINEL (192 aa). A BAR domain is found at 327-536; it reads LKILTRGESQ…QNQVLEEIQN (210 aa). The SH3 1 domain occupies 582–645; that stretch reads SAEELYQAKR…YSSFLKPYNP (64 aa). The disordered stretch occupies residues 673–694; it reads PASDSVTGTSESSIGDSSSSLS. A compositionally biased stretch (low complexity) spans 679–694; the sequence is TGTSESSIGDSSSSLS. The SH3 2 domain maps to 713-776; the sequence is VDEQIFYAVH…PANYLGKMTY (64 aa).

Functionally, may act as a guanine-nucleotide releasing factor. This chain is Rho guanine nucleotide exchange factor 38 (ARHGEF38), found in Homo sapiens (Human).